A 205-amino-acid polypeptide reads, in one-letter code: ATP phosphoribosyltransferase (205 aa).

Belongs to the ATP phosphoribosyltransferase family. Short subfamily. As to quaternary structure, heteromultimer composed of HisG and HisZ subunits.

The protein resides in the cytoplasm. It carries out the reaction 1-(5-phospho-beta-D-ribosyl)-ATP + diphosphate = 5-phospho-alpha-D-ribose 1-diphosphate + ATP. It functions in the pathway amino-acid biosynthesis; L-histidine biosynthesis; L-histidine from 5-phospho-alpha-D-ribose 1-diphosphate: step 1/9. Catalyzes the condensation of ATP and 5-phosphoribose 1-diphosphate to form N'-(5'-phosphoribosyl)-ATP (PR-ATP). Has a crucial role in the pathway because the rate of histidine biosynthesis seems to be controlled primarily by regulation of HisG enzymatic activity. The chain is ATP phosphoribosyltransferase from Leptospira borgpetersenii serovar Hardjo-bovis (strain JB197).